Here is a 228-residue protein sequence, read N- to C-terminus: Auxin-responsive protein IAA14 (228 aa).

An EAR-like (transcriptional repression) motif is present at residues 8–12; that stretch reads LCLGL. The PB1 domain maps to 110–210; that stretch reads VAFVKVSMDG…SCKRLRIMKG (101 aa).

It belongs to the Aux/IAA family. In terms of assembly, homodimers and heterodimers. Interacts with TPL. Preferentially expressed in roots and flowers.

It localises to the nucleus. Functionally, aux/IAA proteins are short-lived transcriptional factors that function as repressors of early auxin response genes at low auxin concentrations. Repression is thought to result from the interaction with auxin response factors (ARFs), proteins that bind to the auxin-responsive promoter element (AuxRE). Formation of heterodimers with ARF proteins may alter their ability to modulate early auxin response genes expression. The sequence is that of Auxin-responsive protein IAA14 (IAA14) from Arabidopsis thaliana (Mouse-ear cress).